The sequence spans 665 residues: Intraflagellar transport protein 70B (665 aa).

TPR repeat units lie at residues 11–44 (DGEF…SPRS), 45–78 (RAGL…HPEL), 154–187 (TDGQ…SGYQ), 189–221 (DLSY…GIRQ), 393–424 (LTIQ…EKYI), 425–457 (PVLM…CNDH), and 459–492 (VWKL…HYDN). The interval 130–154 (PGSRSLVEQLPSREGGEESGGENET) is disordered. A coiled-coil region spans residues 508–535 (YIMTSQNEEAEELMRKIEKEEEQLSYDD). One copy of the TPR 8 repeat lies at 544–577 (CIVNLVIGTLYCAKGNYDFGISRVIKSLEPYNKK).

This sequence belongs to the TTC30/dfy-1/fleer family. As to quaternary structure, interacts with the IFT B complex components IFT27, IFT46, IFT74, IFT52, IFT57, IFT80, IFT81 and IFT88. Interacts with KIF17.

The protein localises to the cell projection. The protein resides in the cilium. Required for polyglutamylation of axonemal tubulin. Plays a role in anterograde intraflagellar transport (IFT), the process by which cilia precursors are transported from the base of the cilium to the site of their incorporation at the tip. This Homo sapiens (Human) protein is Intraflagellar transport protein 70B.